The following is a 365-amino-acid chain: Fructose-1,6-bisphosphate aldolase/phosphatase (365 aa).

Catalysis depends on Asp-11, which acts as the Proton acceptor; for FBP phosphatase activity. 4 residues coordinate Mg(2+): Asp-11, His-18, Asp-52, and Asp-53. His-18 serves as a coordination point for beta-D-fructose 1,6-bisphosphate. Residue His-18 coordinates dihydroxyacetone phosphate. Tyr-90 provides a ligand contact to beta-D-fructose 1,6-bisphosphate. A Mg(2+)-binding site is contributed by Gln-94. Residue 103–104 (GN) coordinates beta-D-fructose 1,6-bisphosphate. Asp-131 contacts Mg(2+). Residue Lys-132 coordinates beta-D-fructose 1,6-bisphosphate. Lys-132 serves as a coordination point for dihydroxyacetone phosphate. Tyr-228 (proton donor/acceptor; for FBP aldolase activity) is an active-site residue. Mg(2+) contacts are provided by Lys-231, Asp-232, and Asp-233. The Schiff-base intermediate with DHAP; for FBP aldolase activity role is filled by Lys-231. Beta-D-fructose 1,6-bisphosphate contacts are provided by residues 241–242 (QS), Arg-265, Asp-286, and Tyr-347. Residues Arg-265 and Asp-286 each contribute to the dihydroxyacetone phosphate site.

Belongs to the FBP aldolase/phosphatase family. In terms of assembly, homooctamer; dimer of tetramers. Mg(2+) serves as cofactor.

It catalyses the reaction beta-D-fructose 1,6-bisphosphate + H2O = beta-D-fructose 6-phosphate + phosphate. The enzyme catalyses beta-D-fructose 1,6-bisphosphate = D-glyceraldehyde 3-phosphate + dihydroxyacetone phosphate. Its pathway is carbohydrate biosynthesis; gluconeogenesis. Catalyzes two subsequent steps in gluconeogenesis: the aldol condensation of dihydroxyacetone phosphate (DHAP) and glyceraldehyde-3-phosphate (GA3P) to fructose-1,6-bisphosphate (FBP), and the dephosphorylation of FBP to fructose-6-phosphate (F6P). This is Fructose-1,6-bisphosphate aldolase/phosphatase from Methanothermobacter marburgensis (strain ATCC BAA-927 / DSM 2133 / JCM 14651 / NBRC 100331 / OCM 82 / Marburg) (Methanobacterium thermoautotrophicum).